Reading from the N-terminus, the 149-residue chain is D-aminoacyl-tRNA deacylase (149 aa).

Residues Gly-137–Pro-138 carry the Gly-cisPro motif, important for rejection of L-amino acids motif.

Belongs to the DTD family. In terms of assembly, homodimer.

It localises to the cytoplasm. It carries out the reaction glycyl-tRNA(Ala) + H2O = tRNA(Ala) + glycine + H(+). It catalyses the reaction a D-aminoacyl-tRNA + H2O = a tRNA + a D-alpha-amino acid + H(+). An aminoacyl-tRNA editing enzyme that deacylates mischarged D-aminoacyl-tRNAs. Also deacylates mischarged glycyl-tRNA(Ala), protecting cells against glycine mischarging by AlaRS. Acts via tRNA-based rather than protein-based catalysis; rejects L-amino acids rather than detecting D-amino acids in the active site. By recycling D-aminoacyl-tRNA to D-amino acids and free tRNA molecules, this enzyme counteracts the toxicity associated with the formation of D-aminoacyl-tRNA entities in vivo and helps enforce protein L-homochirality. The protein is D-aminoacyl-tRNA deacylase of Clostridioides difficile (strain 630) (Peptoclostridium difficile).